The primary structure comprises 592 residues: ATP-dependent lipid A-core flippase (592 aa).

A run of 6 helical transmembrane segments spans residues 31 to 51 (LSSFILAMVAMGVVAATEGII), 76 to 96 (AMLVGIAVVRGVAQFGATYFL), 134 to 154 (AVIFEVNQVLQVLTGVFITLV), 161 to 181 (LALLIFLFYTNWRLTLVVAVI), 261 to 281 (VTQFLAALALSVILAIAMVQA), and 288 to 308 (VGGFTGFVMAMLLLISPLKHL). In terms of domain architecture, ABC transmembrane type-1 spans 35–317 (ILAMVAMGVV…LTDVNQPMQR (283 aa)). The ABC transporter domain maps to 349-587 (LRFEHVTFRY…DGLYAGLHRI (239 aa)). An ATP-binding site is contributed by 383–390 (GPSGSGKT).

The protein belongs to the ABC transporter superfamily. Lipid exporter (TC 3.A.1.106) family. In terms of assembly, homodimer.

It localises to the cell inner membrane. The enzyme catalyses ATP + H2O + lipid A-core oligosaccharideSide 1 = ADP + phosphate + lipid A-core oligosaccharideSide 2.. Its function is as follows. Involved in lipopolysaccharide (LPS) biosynthesis. Translocates lipid A-core from the inner to the outer leaflet of the inner membrane. Transmembrane domains (TMD) form a pore in the inner membrane and the ATP-binding domain (NBD) is responsible for energy generation. The chain is ATP-dependent lipid A-core flippase from Ralstonia nicotianae (strain ATCC BAA-1114 / GMI1000) (Ralstonia solanacearum).